Consider the following 162-residue polypeptide: Phenazine biosynthesis protein PhzA1 (162 aa).

The protein belongs to the PhzA/PhzB family.

The protein operates within antibiotic biosynthesis; phenazine biosynthesis. In terms of biological role, involved in the biosynthesis of the antibiotic phenazine, a nitrogen-containing heterocyclic molecule. PhzA1 (operon phzA1B1C1E1F1G1) has a role in the biosynthesis of the phenazine during planktonic growth. The sequence is that of Phenazine biosynthesis protein PhzA1 from Pseudomonas aeruginosa (strain ATCC 15692 / DSM 22644 / CIP 104116 / JCM 14847 / LMG 12228 / 1C / PRS 101 / PAO1).